Reading from the N-terminus, the 105-residue chain is Large ribosomal subunit protein uL24 (105 aa).

Belongs to the universal ribosomal protein uL24 family. Part of the 50S ribosomal subunit.

Its function is as follows. One of two assembly initiator proteins, it binds directly to the 5'-end of the 23S rRNA, where it nucleates assembly of the 50S subunit. One of the proteins that surrounds the polypeptide exit tunnel on the outside of the subunit. The protein is Large ribosomal subunit protein uL24 of Chromohalobacter salexigens (strain ATCC BAA-138 / DSM 3043 / CIP 106854 / NCIMB 13768 / 1H11).